Consider the following 494-residue polypeptide: V-type proton ATPase subunit B (494 aa).

R384 serves as a coordination point for ATP.

This sequence belongs to the ATPase alpha/beta chains family. In terms of assembly, V-ATPase is a heteromultimeric enzyme made up of two complexes: the ATP-hydrolytic V1 complex and the proton translocation V0 complex. The V1 complex consists of three catalytic AB heterodimers that form a heterohexamer, three peripheral stalks each consisting of EG heterodimers, one central rotor including subunits D and F, and the regulatory subunits C and H. The proton translocation complex V0 consists of the proton transport subunit a, a ring of proteolipid subunits c9c'', rotary subunit d, subunits e and f, and the accessory subunits VhaAC45 and ATP6AP2.

Non-catalytic subunit of the V1 complex of vacuolar(H+)-ATPase (V-ATPase), a multisubunit enzyme composed of a peripheral complex (V1) that hydrolyzes ATP and a membrane integral complex (V0) that translocates protons. V-ATPase is responsible for acidifying and maintaining the pH of intracellular compartments and in some cell types, is targeted to the plasma membrane, where it is responsible for acidifying the extracellular environment. Essential for the proper assembly and activity of V-ATPase. In Heliothis virescens (Tobacco budworm moth), this protein is V-type proton ATPase subunit B (VHA55).